We begin with the raw amino-acid sequence, 454 residues long: Bifunctional protein GlmU (454 aa).

Positions 1-226 (MLAVAVLAAG…PDEVNGINNR (226 aa)) are pyrophosphorylase. UDP-N-acetyl-alpha-D-glucosamine contacts are provided by residues 7–10 (LAAG), Lys21, Gln73, and 78–79 (GT). A Mg(2+)-binding site is contributed by Asp103. UDP-N-acetyl-alpha-D-glucosamine contacts are provided by Gly140, Glu155, Asn170, and Asn224. Asn224 is a Mg(2+) binding site. The interval 227 to 247 (RQLAQCEGVLQQRLRDHWMDE) is linker. The tract at residues 248 to 454 (GVTFVDPASC…WDRNTQAAQS (207 aa)) is N-acetyltransferase. Residues Arg329 and Lys347 each coordinate UDP-N-acetyl-alpha-D-glucosamine. The active-site Proton acceptor is the His359. UDP-N-acetyl-alpha-D-glucosamine contacts are provided by Tyr362 and Asn373. Acetyl-CoA-binding residues include Ala376, Ala419, and Arg436.

The protein in the N-terminal section; belongs to the N-acetylglucosamine-1-phosphate uridyltransferase family. This sequence in the C-terminal section; belongs to the transferase hexapeptide repeat family. In terms of assembly, homotrimer. Mg(2+) serves as cofactor.

The protein resides in the cytoplasm. The enzyme catalyses alpha-D-glucosamine 1-phosphate + acetyl-CoA = N-acetyl-alpha-D-glucosamine 1-phosphate + CoA + H(+). The catalysed reaction is N-acetyl-alpha-D-glucosamine 1-phosphate + UTP + H(+) = UDP-N-acetyl-alpha-D-glucosamine + diphosphate. The protein operates within nucleotide-sugar biosynthesis; UDP-N-acetyl-alpha-D-glucosamine biosynthesis; N-acetyl-alpha-D-glucosamine 1-phosphate from alpha-D-glucosamine 6-phosphate (route II): step 2/2. Its pathway is nucleotide-sugar biosynthesis; UDP-N-acetyl-alpha-D-glucosamine biosynthesis; UDP-N-acetyl-alpha-D-glucosamine from N-acetyl-alpha-D-glucosamine 1-phosphate: step 1/1. It functions in the pathway bacterial outer membrane biogenesis; LPS lipid A biosynthesis. Its function is as follows. Catalyzes the last two sequential reactions in the de novo biosynthetic pathway for UDP-N-acetylglucosamine (UDP-GlcNAc). The C-terminal domain catalyzes the transfer of acetyl group from acetyl coenzyme A to glucosamine-1-phosphate (GlcN-1-P) to produce N-acetylglucosamine-1-phosphate (GlcNAc-1-P), which is converted into UDP-GlcNAc by the transfer of uridine 5-monophosphate (from uridine 5-triphosphate), a reaction catalyzed by the N-terminal domain. In Synechococcus sp. (strain CC9311), this protein is Bifunctional protein GlmU.